Consider the following 47-residue polypeptide: Delta-actitoxin-Aspp1a (47 aa).

Disulfide bonds link Cys-4–Cys-44, Cys-6–Cys-34, and Cys-27–Cys-45.

It belongs to the sea anemone sodium channel inhibitory toxin family. Type I subfamily.

It is found in the secreted. The protein localises to the nematocyst. In terms of biological role, binds specifically to voltage-gated sodium channels (Nav) (site 3), thereby delaying their inactivation during signal transduction. Has a heart stimulation effect on isolated rat atria that is higher than that of Hk7a, Hk8a and Hk16a. The sequence is that of Delta-actitoxin-Aspp1a from Anthopleura sp. (strain 'Zhanjiang') (Sea anemone).